The sequence spans 510 residues: Dolichyl-P-Man:Man5GlcNAc2-PP-dolichol alpha-1,3-mannosyltransferase Alg3 (510 aa).

The Cytoplasmic portion of the chain corresponds to 1–43 (MAPPKAASHRPAVRRKKSGTLVDSILDKYLNVRFFKYLLLEPA). Residues 44–64 (ALPIVGLFVLLAELVINVVVI) form a helical membrane-spanning segment. Topologically, residues 65–97 (QRVPYTEIDWVAYMQECEGFLNGTTNYSLLRGD) are lumenal. A helical transmembrane segment spans residues 98-118 (TGPLVYPAAFVYIYSALYYVT). Residues 119-125 (SHGTNVR) are Cytoplasmic-facing. Residues 126–146 (LAQYIFAGIYLLQLALVLRLY) form a helical membrane-spanning segment. Residues 147–171 (SKSRKVPPYVLVLSAFTSYRIHSIY) lie on the Lumenal side of the membrane. A helical transmembrane segment spans residues 172–192 (VLRLFNDPVAVLLLYAALNLF). The Cytoplasmic segment spans residues 193–211 (LDRRWTLGSTFFSLAVGVK). Residues 212–232 (MNILLFAPALLLFYLANLGLL) form a helical membrane-spanning segment. Arginine 233 is a topological domain (lumenal). A helical membrane pass occupies residues 234-254 (TILQLAVCGVIQLLLGAPFLL). Over 255–294 (THPVEYLRGSFDLGRIFEHKWTVNYRFLSRDVFENRTFHV) the chain is Cytoplasmic. Residues 295 to 315 (SLLGLHLLLLLAFAKPIWTFF) form a helical membrane-spanning segment. The Lumenal portion of the chain corresponds to 316–403 (QSYVRLRRIE…YGIHFDRCTQ (88 aa)). Residues 337–358 (LQLKAQKRPKKVEKDKDKDQKK) are disordered. The span at 348 to 358 (VEKDKDKDQKK) shows a compositional bias: basic and acidic residues. The helical transmembrane segment at 404 to 424 (LALLPFFLCNLVGVACSRSLH) threads the bilayer. At 425–426 (YQ) the chain is on the cytoplasmic side. A helical membrane pass occupies residues 427–447 (FYVWYFHSLPYLAWSTPYSLG). The Lumenal portion of the chain corresponds to 448 to 464 (VRCLILGLIEYCWNTYP). The chain crosses the membrane as a helical span at residues 465–485 (STNFSSAALHFTHIILLAGVA). The Cytoplasmic segment spans residues 486 to 510 (KQLIQTMRINNAAKREQQEQQKKLQ).

This sequence belongs to the glycosyltransferase ALG3 family.

It localises to the endoplasmic reticulum membrane. It carries out the reaction an alpha-D-Man-(1-&gt;2)-alpha-D-Man-(1-&gt;2)-alpha-D-Man-(1-&gt;3)-[alpha-D-Man-(1-&gt;6)]-beta-D-Man-(1-&gt;4)-beta-D-GlcNAc-(1-&gt;4)-alpha-D-GlcNAc-diphospho-di-trans,poly-cis-dolichol + a di-trans,poly-cis-dolichyl beta-D-mannosyl phosphate = an alpha-D-Man-(1-&gt;2)-alpha-D-Man-(1-&gt;2)-alpha-D-Man-(1-&gt;3)-[alpha-D-Man-(1-&gt;3)-alpha-D-Man-(1-&gt;6)]-beta-D-Man-(1-&gt;4)-beta-D-GlcNAc-(1-&gt;4)-alpha-D-GlcNAc-diphospho-di-trans,poly-cis-dolichol + a di-trans,poly-cis-dolichyl phosphate + H(+). It functions in the pathway protein modification; protein glycosylation. Probable alpha-1,3-mannosyltransferase involved in the N-glycosylation pathway. Involved in glycosylation of the TNF receptor grnd, regulating its ligand affinity. Required for normal epithelial growth and architecture. Suppressor of JNK-dependent intestinal stem cell proliferation. This chain is Dolichyl-P-Man:Man5GlcNAc2-PP-dolichol alpha-1,3-mannosyltransferase Alg3, found in Drosophila melanogaster (Fruit fly).